The sequence spans 154 residues: uncharacterized protein (154 aa).

Functionally, this protein may be involved in virus assembly. Essential for virus function. This is an uncharacterized protein from Saccharolobus solfataricus (Sulfolobus solfataricus).